We begin with the raw amino-acid sequence, 202 residues long: Adenylyl-sulfate kinase (202 aa).

35 to 42 is a binding site for ATP; sequence GLSGSGKS. Ser-109 serves as the catalytic Phosphoserine intermediate.

It belongs to the APS kinase family.

The catalysed reaction is adenosine 5'-phosphosulfate + ATP = 3'-phosphoadenylyl sulfate + ADP + H(+). It participates in sulfur metabolism; hydrogen sulfide biosynthesis; sulfite from sulfate: step 2/3. In terms of biological role, catalyzes the synthesis of activated sulfate. The protein is Adenylyl-sulfate kinase of Bacteroides fragilis (strain ATCC 25285 / DSM 2151 / CCUG 4856 / JCM 11019 / LMG 10263 / NCTC 9343 / Onslow / VPI 2553 / EN-2).